The sequence spans 124 residues: Large ribosomal subunit protein bL19 (124 aa).

Belongs to the bacterial ribosomal protein bL19 family.

Functionally, this protein is located at the 30S-50S ribosomal subunit interface and may play a role in the structure and function of the aminoacyl-tRNA binding site. This is Large ribosomal subunit protein bL19 from Acidiphilium cryptum (strain JF-5).